Here is a 1510-residue protein sequence, read N- to C-terminus: Chromosome partition protein MukB (1510 aa).

A coiled-coil region spans residues 6–30 (ELENEIELESDEVIMENENVEEIVD). Position 75–82 (75–82 (GGNGAGKS)) interacts with ATP. Coiled-coil stretches lie at residues 346–506 (QHRL…HKMS), 553–633 (QQTP…NLTA), 673–706 (MQSQLVKERELTMQRDQLEQKRLQLDEQISRLSQ), 821–847 (RAAREKRLEELQIERDEVAEQYAQIAF), 876–1064 (EELM…IQLQ), 1094–1149 (ERAR…RELV), and 1249–1305 (DAIE…QNIS). A flexible hinge region spans residues 707-824 (PDGSEDPRLN…EIPLFGRAAR (118 aa)).

This sequence belongs to the SMC family. MukB subfamily. Homodimerization via its hinge domain. Binds to DNA via its C-terminal region. Interacts, and probably forms a ternary complex, with MukE and MukF via its C-terminal region. The complex formation is stimulated by calcium or magnesium. Interacts with tubulin-related protein FtsZ.

It localises to the cytoplasm. Its subcellular location is the nucleoid. Its function is as follows. Plays a central role in chromosome condensation, segregation and cell cycle progression. Functions as a homodimer, which is essential for chromosome partition. Involved in negative DNA supercoiling in vivo, and by this means organize and compact chromosomes. May achieve or facilitate chromosome segregation by condensation DNA from both sides of a centrally located replisome during cell division. This is Chromosome partition protein MukB from Haemophilus influenzae (strain 86-028NP).